The primary structure comprises 576 residues: A-type ATP synthase subunit A (576 aa).

Position 228-235 (228-235 (GGFGTGKT)) interacts with ATP.

It belongs to the ATPase alpha/beta chains family. As to quaternary structure, has multiple subunits with at least A(3), B(3), C, D, E, F, H, I and proteolipid K(x).

The protein resides in the cell membrane. The catalysed reaction is ATP + H2O + 4 H(+)(in) = ADP + phosphate + 5 H(+)(out). Functionally, component of the A-type ATP synthase that produces ATP from ADP in the presence of a proton gradient across the membrane. The A chain is the catalytic subunit. The protein is A-type ATP synthase subunit A of Methanothrix thermoacetophila (strain DSM 6194 / JCM 14653 / NBRC 101360 / PT) (Methanosaeta thermophila).